Here is an 81-residue protein sequence, read N- to C-terminus: Defensin-like protein 311 (81 aa).

The signal sequence occupies residues 1 to 24 (MEKISAFFVILFLVSSCLVTMSVG). Disulfide bonds link C27–C50, C33–C57, and C41–C59.

Belongs to the DEFL family.

The protein resides in the secreted. The polypeptide is Defensin-like protein 311 (Arabidopsis thaliana (Mouse-ear cress)).